Reading from the N-terminus, the 315-residue chain is Acetyl-coenzyme A carboxylase carboxyl transferase subunit alpha (315 aa).

In terms of domain architecture, CoA carboxyltransferase C-terminal spans 40-293; sequence LQDKSKTLTE…REELSSQLAM (254 aa).

Belongs to the AccA family. In terms of assembly, acetyl-CoA carboxylase is a heterohexamer composed of biotin carboxyl carrier protein (AccB), biotin carboxylase (AccC) and two subunits each of ACCase subunit alpha (AccA) and ACCase subunit beta (AccD).

It is found in the cytoplasm. It carries out the reaction N(6)-carboxybiotinyl-L-lysyl-[protein] + acetyl-CoA = N(6)-biotinyl-L-lysyl-[protein] + malonyl-CoA. It functions in the pathway lipid metabolism; malonyl-CoA biosynthesis; malonyl-CoA from acetyl-CoA: step 1/1. In terms of biological role, component of the acetyl coenzyme A carboxylase (ACC) complex. First, biotin carboxylase catalyzes the carboxylation of biotin on its carrier protein (BCCP) and then the CO(2) group is transferred by the carboxyltransferase to acetyl-CoA to form malonyl-CoA. This is Acetyl-coenzyme A carboxylase carboxyl transferase subunit alpha from Pseudomonas syringae pv. syringae (strain B728a).